A 75-amino-acid polypeptide reads, in one-letter code: Cytochrome c oxidase assembly factor 5 (75 aa).

The region spanning 28 to 66 (QSDCVLQEGKSPKECLKEGYCKALQVTFFECKRSILDNR) is the CHCH domain. The Cx10C motif motif lies at 31–42 (CVLQEGKSPKEC). Cystine bridges form between Cys-31–Cys-58 and Cys-42–Cys-48. The short motif at 48 to 58 (CKALQVTFFEC) is the Cx9C motif element.

Belongs to the PET191 family.

Its function is as follows. Involved in an early step of the mitochondrial complex IV assembly process. The sequence is that of Cytochrome c oxidase assembly factor 5 (coa5) from Xenopus laevis (African clawed frog).